A 32-amino-acid chain; its full sequence is Dermaseptin-8 (32 aa).

Gln-32 carries the post-translational modification Glutamine amide.

In terms of tissue distribution, expressed by the skin glands.

The protein resides in the secreted. Its function is as follows. Antimicrobial peptide, active against the Gram-positive bacterium S.aureus, and the Gram-negative bacteriun E.coli. Has hemolytic activity at 432 uM. The sequence is that of Dermaseptin-8 from Phyllomedusa tarsius (Brownbelly leaf frog).